Reading from the N-terminus, the 309-residue chain is NAD kinase (309 aa).

The active-site Proton acceptor is Asp89. NAD(+) is bound by residues 89–90 (DG), 163–164 (NE), His174, Arg191, Asp193, and 204–209 (TAYALS).

It belongs to the NAD kinase family. A divalent metal cation serves as cofactor.

It is found in the cytoplasm. The catalysed reaction is NAD(+) + ATP = ADP + NADP(+) + H(+). Its function is as follows. Involved in the regulation of the intracellular balance of NAD and NADP, and is a key enzyme in the biosynthesis of NADP. Catalyzes specifically the phosphorylation on 2'-hydroxyl of the adenosine moiety of NAD to yield NADP. This chain is NAD kinase, found in Shewanella baltica (strain OS185).